The sequence spans 607 residues: F-box protein At-B (607 aa).

One can recognise an F-box domain in the interval 9 to 47; the sequence is LAEEILKRLDLENLCSVACVSTTLRSAVVSGVLPSLTSL. LRR repeat units follow at residues 51-76, 77-99, 100-125, 130-155, 228-253, 262-286, 295-320, 321-346, 347-372, 373-397, 398-422, 424-447, 448-477, 478-503, 504-536, and 537-563; these read VFSP…TLNC, LRLN…HLLR, CSLL…TLEM, SPDV…QLNI, LDLI…DLED, DNDL…SLVR, FKRI…RLGG, FPKV…EVRG, AFLL…RLST, CPLI…DLGS, CKSI…NLAG, DVTD…SLRG, CRRV…DLGH, MPGI…SIRS, CFHV…NVHN, and CVSL…GMGQ.

The chain is F-box protein At-B (ATB) from Arabidopsis thaliana (Mouse-ear cress).